A 241-amino-acid polypeptide reads, in one-letter code: ATP synthase subunit a (241 aa).

The next 6 helical transmembrane spans lie at 19–39 (AVLIAHLLLVAVIVIMIAKMA), 80–100 (LVAAVGLFIFVSNVIGIIPGF), 106–126 (NINVTLPLALMVFVYYNYEGI), 135–155 (FAHFAGPVKLLAPLMFPIEIV), 177–197 (LFLWVLLMLVPFVAPLPAYLL), and 203–223 (LLQTFVFMILIYVYLAGAVAI).

This sequence belongs to the ATPase A chain family. As to quaternary structure, F-type ATPases have 2 components, CF(1) - the catalytic core - and CF(0) - the membrane proton channel. CF(1) has five subunits: alpha(3), beta(3), gamma(1), delta(1), epsilon(1). CF(0) has three main subunits: a(1), b(2) and c(9-12). The alpha and beta chains form an alternating ring which encloses part of the gamma chain. CF(1) is attached to CF(0) by a central stalk formed by the gamma and epsilon chains, while a peripheral stalk is formed by the delta and b chains.

Its subcellular location is the cell inner membrane. In terms of biological role, key component of the proton channel; it plays a direct role in the translocation of protons across the membrane. The chain is ATP synthase subunit a from Sulfurovum sp. (strain NBC37-1).